Consider the following 383-residue polypeptide: Adaptive-response sensory kinase SasA (383 aa).

Positions 152 to 365 (MVAHELRTPL…CFTFNVPIWQ (214 aa)) constitute a Histidine kinase domain. The residue at position 155 (H155) is a Phosphohistidine; by autocatalysis.

In terms of assembly, homooligomerizes. Interacts with KaiC. Participates in the KaiABC clock complex, whose core is composed of a KaiC homohexamer, 6 KaiB and up to 6 KaiA dimers. SasA and KaiB(fs) compete to bind to KaiC.

It carries out the reaction ATP + protein L-histidine = ADP + protein N-phospho-L-histidine.. Member of the two-component regulatory system SasA/RpaA involved in genome-wide circadian gene expression. One of several clock output pathways. Participates in the Kai clock protein complex, the main circadian regulator in cyanobacteria, via its interaction with KaiC. KaiC enhances the autophosphorylation activity of SasA, which then transfers its phosphate group to RpaA to activate it. In addition to its output function, recruits fold-shifted KaiB (KaiB(fs)) to KaiC to cooperatively form the KaiB(6):KaiC(6) complex (independent of SasA kinase activity). Required for robustness of the circadian rhythm of gene expression and is involved in clock output, also required for adaptation to light/dark cycles. The protein is Adaptive-response sensory kinase SasA of Synechococcus sp. (strain CC9311).